We begin with the raw amino-acid sequence, 133 residues long: UPF0102 protein Anae109_1947 (133 aa).

The protein belongs to the UPF0102 family.

The chain is UPF0102 protein Anae109_1947 from Anaeromyxobacter sp. (strain Fw109-5).